Here is a 172-residue protein sequence, read N- to C-terminus: Stellate protein CG33243 (172 aa).

The protein belongs to the casein kinase 2 subunit beta family. As to quaternary structure, interacts in vitro with the casein kinase 2 alpha subunit (CkII-alpha). The relevance of such interaction is however unclear in vivo. As to expression, probably not expressed in wild-type flies. In males lacking the Y chromosome, it is testis-specific and constitutes the main component of star-shaped crystals.

In terms of biological role, unknown. In males lacking the Y chromosome, its strong overexpression leads to the appearance of proteinaceous star-shaped crystals in the primary spermatocytes causing meiotic drive, possibly by interfering with normal casein kinase 2 activity. This chain is Stellate protein CG33243 (Ste:CG33243), found in Drosophila melanogaster (Fruit fly).